Here is a 584-residue protein sequence, read N- to C-terminus: MAGRRLNLRWALSVLCVLLMAETVSGTRGSSTGAHISPQFPASGVNQTPVVDCRKVCGLNVSDRCDFIRTNPDCHSDGGYLDYLEGIFCHFPPSLLPLAVTLYVSWLLYLFLILGVTAAKFFCPNLSAISTTLKLSHNVAGVTFLAFGNGAPDIFSALVAFSDPHTAGLALGALFGAGVLVTTVVAGGITILHPFMAASRPFFRDIVFYMVAVFLTFLMLFRGRVTLAWALGYLGLYVFYVVTVILCTWIYQRQRRGSLFCPMPVTPEILSDSEEDRVSSNTNSYDYGDEYRPLFFYQETTAQILVRALNPLDYMKWRRKSAYWKALKVFKLPVEFLLLLTVPVVDPDKDDQNWKRPLNCLHLVISPLVVVLTLQSGTYGVYEIGGLVPVWVVVVIAGTALASVTFFATSDSQPPRLHWLFAFLGFLTSALWINAAATEVVNILRSLGVVFRLSNTVLGLTLLAWGNSIGDAFSDFTLARQGYPRMAFSACFGGIIFNILVGVGLGCLLQISRSHTEVKLEPDGLLVWVLAGALGLSLVFSLVSVPLQCFQLSRVYGFCLLLFYLNFLVVALLTEFGVIHLKSM.

Positions 1–26 (MAGRRLNLRWALSVLCVLLMAETVSG) are cleaved as a signal peptide. Residues 27–95 (TRGSSTGAHI…GIFCHFPPSL (69 aa)) lie on the Extracellular side of the membrane. N-linked (GlcNAc...) asparagine glycosylation occurs at N60. A helical transmembrane segment spans residues 96–116 (LPLAVTLYVSWLLYLFLILGV). Topologically, residues 117-140 (TAAKFFCPNLSAISTTLKLSHNVA) are cytoplasmic. Residues 141-161 (GVTFLAFGNGAPDIFSALVAF) traverse the membrane as a helical segment. Residues 162–168 (SDPHTAG) lie on the Extracellular side of the membrane. The helical transmembrane segment at 169–189 (LALGALFGAGVLVTTVVAGGI) threads the bilayer. At 190–200 (TILHPFMAASR) the chain is on the cytoplasmic side. Residues 201–221 (PFFRDIVFYMVAVFLTFLMLF) traverse the membrane as a helical segment. At 222–226 (RGRVT) the chain is on the extracellular side. A helical transmembrane segment spans residues 227–247 (LAWALGYLGLYVFYVVTVILC). The Cytoplasmic portion of the chain corresponds to 248 to 325 (TWIYQRQRRG…KWRRKSAYWK (78 aa)). Phosphoserine; by PKA is present on S258. Residues 326 to 346 (ALKVFKLPVEFLLLLTVPVVD) traverse the membrane as a helical segment. At 347–360 (PDKDDQNWKRPLNC) the chain is on the extracellular side. A helical transmembrane segment spans residues 361-381 (LHLVISPLVVVLTLQSGTYGV). Over 382–383 (YE) the chain is Cytoplasmic. Residues 384 to 404 (IGGLVPVWVVVVIAGTALASV) traverse the membrane as a helical segment. Residues 405 to 416 (TFFATSDSQPPR) lie on the Extracellular side of the membrane. A helical membrane pass occupies residues 417–437 (LHWLFAFLGFLTSALWINAAA). The Cytoplasmic portion of the chain corresponds to 438–445 (TEVVNILR). A helical transmembrane segment spans residues 446–466 (SLGVVFRLSNTVLGLTLLAWG). The Extracellular segment spans residues 467–487 (NSIGDAFSDFTLARQGYPRMA). The helical transmembrane segment at 488–508 (FSACFGGIIFNILVGVGLGCL) threads the bilayer. Residues 509–524 (LQISRSHTEVKLEPDG) are Cytoplasmic-facing. The helical transmembrane segment at 525 to 545 (LLVWVLAGALGLSLVFSLVSV) threads the bilayer. The Extracellular segment spans residues 546–558 (PLQCFQLSRVYGF). Residues 559-579 (CLLLFYLNFLVVALLTEFGVI) form a helical membrane-spanning segment. The Cytoplasmic segment spans residues 580 to 584 (HLKSM).

Belongs to the Ca(2+):cation antiporter (CaCA) (TC 2.A.19) family. SLC24A subfamily. Phosphorylation at Ser-258 by PKA prevents calcium overload. Present in pancreatic beta-cells (at protein level).

Its subcellular location is the mitochondrion inner membrane. The catalysed reaction is Ca(2+)(in) + 3 Na(+)(out) = Ca(2+)(out) + 3 Na(+)(in). The enzyme catalyses 3 Li(+)(out) + Ca(2+)(in) = 3 Li(+)(in) + Ca(2+)(out). Its activity is regulated as follows. Inhibited by the sodium/calcium exchanger inhibitor CGP-37157. Strongly inhibited by zinc. Its function is as follows. Mitochondrial sodium/calcium antiporter that mediates sodium-dependent calcium efflux from mitochondrion, by mediating the exchange of 3 sodium ions per 1 calcium ion. Plays a central role in mitochondrial calcium homeostasis by mediating mitochondrial calcium extrusion: calcium efflux is essential for mitochondrial function and cell survival, notably in cardiomyocytes. Regulates rates of glucose-dependent insulin secretion in pancreatic beta-cells during the first phase of insulin secretion: acts by mediating efflux of calcium from mitochondrion, thereby affecting cytoplasmic calcium responses. Required for store-operated Ca(2+) entry (SOCE) and Ca(2+) release-activated Ca(2+) (CRAC) channel regulation: sodium transport by SLC8B1 leads to promote calcium-shuttling that modulates mitochondrial redox status, thereby regulating SOCE activity. Involved in B-lymphocyte chemotaxis. Able to transport Ca(2+) in exchange of either Li(+) or Na(+), explaining how Li(+) catalyzes Ca(2+) exchange. In contrast to other members of the family its function is independent of K(+). The sequence is that of Mitochondrial sodium/calcium exchanger protein from Homo sapiens (Human).